The chain runs to 47 residues: uncharacterized protein (47 aa).

The interval Phe-24–Ile-47 is disordered.

This is an uncharacterized protein from Mycobacterium tuberculosis (strain ATCC 25618 / H37Rv).